Consider the following 624-residue polypeptide: Bifunctional 3'-phosphoadenosine 5'-phosphosulfate synthase 1 (624 aa).

Methionine 1 is subject to N-acetylmethionine. The interval 1–225 is adenylyl-sulfate kinase; the sequence is MELPGSLCKK…VVELLQERDI (225 aa). At lysine 12 the chain carries N6-acetyllysine. Residue 62–67 coordinates ATP; that stretch reads GAGKTT. Residues 89 to 92, phenylalanine 101, 106 to 109, 132 to 133, lysine 171, and 184 to 185 contribute to the adenosine 5'-phosphosulfate site; these read DNIR, REEN, IS, and GF. Residues cysteine 207, cysteine 212, 419–422, 521–525, and alanine 563 each bind ATP; these read QLRN and GRDPA. The segment at 234 to 624 is sulfate adenylyltransferase; the sequence is VKELYVPENK…AEYYKALEKA (391 aa).

In the N-terminal section; belongs to the APS kinase family. The protein in the C-terminal section; belongs to the sulfate adenylyltransferase family. In terms of assembly, homodimer.

The catalysed reaction is sulfate + ATP + H(+) = adenosine 5'-phosphosulfate + diphosphate. It carries out the reaction adenosine 5'-phosphosulfate + ATP = 3'-phosphoadenylyl sulfate + ADP + H(+). Its pathway is sulfur metabolism; sulfate assimilation. In terms of biological role, bifunctional enzyme with both ATP sulfurylase and APS kinase activity, which mediates two steps in the sulfate activation pathway. The first step is the transfer of a sulfate group to ATP to yield adenosine 5'-phosphosulfate (APS), and the second step is the transfer of a phosphate group from ATP to APS yielding 3'-phosphoadenylylsulfate (PAPS: activated sulfate donor used by sulfotransferase). In mammals, PAPS is the sole source of sulfate; APS appears to be only an intermediate in the sulfate-activation pathway. Required for normal biosynthesis of sulfated L-selectin ligands in endothelial cells. The sequence is that of Bifunctional 3'-phosphoadenosine 5'-phosphosulfate synthase 1 (PAPSS1) from Cavia porcellus (Guinea pig).